The following is a 287-amino-acid chain: Mu-like prophage FluMu DNA transposition protein B (287 aa).

In terms of domain architecture, HTH cro/C1-type spans 7-62; sequence LKQHLSDSQITQAQLAREAGVNAGALSAYLNDNYKGNIADVEAKLAAYLEKKAVQA. A DNA-binding region (H-T-H motif) is located at residues 18–37; sequence QAQLAREAGVNAGALSAYLN. 98 to 105 is a binding site for ATP; it reads GMSGVGKT.

This protein is a non-specific DNA-binding and ATP-hydrolyzing protein essential for bacteriophage integration and replication. This chain is Mu-like prophage FluMu DNA transposition protein B, found in Haemophilus influenzae (strain ATCC 51907 / DSM 11121 / KW20 / Rd).